The following is a 262-amino-acid chain: MSLLNLSGVRLSHGGHLVLDRVDLTVDAGRIITVVGPNGAGKSSLLKVALGLLRPDAGTVERGAKVIGYVPQRLDIGRLLPLSVRRFLAMAVAERPPAGRLEETLDLVGAGHVLGRQVVDLSGGEMQRVLLARALLRRPDLLVLDEPVGGVDVAGQAELYDLITGQAREHGVGVLMVSHDLHVVMAATDHVVCLNRHVCCAGHPETVSRHPEYLALFGPRVAASLAIYTHAHDHGHGADGSVLPLAEGGGEPHTHGPGCRHG.

The region spanning 4–220 (LNLSGVRLSH…PEYLALFGPR (217 aa)) is the ABC transporter domain. 36 to 43 (GPNGAGKS) lines the ATP pocket. The interval 238 to 262 (ADGSVLPLAEGGGEPHTHGPGCRHG) is disordered.

It belongs to the ABC transporter superfamily. Zinc importer (TC 3.A.1.15.5) family. In terms of assembly, the complex is composed of two ATP-binding proteins (ZnuC), two transmembrane proteins (ZnuB) and a solute-binding protein (ZnuA).

The protein resides in the cell inner membrane. The enzyme catalyses Zn(2+)(out) + ATP(in) + H2O(in) = Zn(2+)(in) + ADP(in) + phosphate(in) + H(+)(in). Part of the ABC transporter complex ZnuABC involved in zinc import. Responsible for energy coupling to the transport system. The protein is Zinc import ATP-binding protein ZnuC of Paramagnetospirillum magneticum (strain ATCC 700264 / AMB-1) (Magnetospirillum magneticum).